A 276-amino-acid polypeptide reads, in one-letter code: Shikimate dehydrogenase (NADP(+)) (276 aa).

Shikimate-binding positions include 15-17 and threonine 62; that span reads SLS. Lysine 66 acts as the Proton acceptor in catalysis. Glutamate 78 lines the NADP(+) pocket. Shikimate contacts are provided by asparagine 87 and aspartate 102. NADP(+) is bound by residues 151–156 and isoleucine 218; that span reads NRTVEK. Tyrosine 220 serves as a coordination point for shikimate. Glycine 241 contributes to the NADP(+) binding site.

The protein belongs to the shikimate dehydrogenase family. As to quaternary structure, homodimer.

The enzyme catalyses shikimate + NADP(+) = 3-dehydroshikimate + NADPH + H(+). Its pathway is metabolic intermediate biosynthesis; chorismate biosynthesis; chorismate from D-erythrose 4-phosphate and phosphoenolpyruvate: step 4/7. In terms of biological role, involved in the biosynthesis of the chorismate, which leads to the biosynthesis of aromatic amino acids. Catalyzes the reversible NADPH linked reduction of 3-dehydroshikimate (DHSA) to yield shikimate (SA). The chain is Shikimate dehydrogenase (NADP(+)) from Geobacillus kaustophilus (strain HTA426).